The primary structure comprises 122 residues: uncharacterized protein (122 aa).

Its subcellular location is the mitochondrion. This is an uncharacterized protein from Arabidopsis thaliana (Mouse-ear cress).